Here is a 385-residue protein sequence, read N- to C-terminus: S-adenosylmethionine synthase (385 aa).

H15 contacts ATP. D17 contributes to the Mg(2+) binding site. K(+) is bound at residue E43. L-methionine contacts are provided by E56 and Q99. A flexible loop region spans residues 99–109; sequence QSVDIAQGVDR. Residues 164–166, 230–231, D239, 245–246, and K266 each bind ATP; these read DAK, RF, and RK. D239 is an L-methionine binding site. Position 270 (K270) interacts with L-methionine.

The protein belongs to the AdoMet synthase family. Homotetramer; dimer of dimers. Requires Mg(2+) as cofactor. The cofactor is K(+).

The protein resides in the cytoplasm. The catalysed reaction is L-methionine + ATP + H2O = S-adenosyl-L-methionine + phosphate + diphosphate. It participates in amino-acid biosynthesis; S-adenosyl-L-methionine biosynthesis; S-adenosyl-L-methionine from L-methionine: step 1/1. In terms of biological role, catalyzes the formation of S-adenosylmethionine (AdoMet) from methionine and ATP. The overall synthetic reaction is composed of two sequential steps, AdoMet formation and the subsequent tripolyphosphate hydrolysis which occurs prior to release of AdoMet from the enzyme. The protein is S-adenosylmethionine synthase of Alkalilimnicola ehrlichii (strain ATCC BAA-1101 / DSM 17681 / MLHE-1).